The chain runs to 295 residues: Probable alpha-L-glutamate ligase (295 aa).

The 184-residue stretch at 104-287 (HQLLAAQGID…VAGAIVQHLE (184 aa)) folds into the ATP-grasp domain. Residues Lys-141, 178-179 (EF), Asp-187, and 211-213 (RSN) contribute to the ATP site. 3 residues coordinate Mg(2+): Asp-248, Glu-260, and Asn-262. 3 residues coordinate Mn(2+): Asp-248, Glu-260, and Asn-262.

Belongs to the RimK family. Requires Mg(2+) as cofactor. Mn(2+) serves as cofactor.

The polypeptide is Probable alpha-L-glutamate ligase (Xanthomonas oryzae pv. oryzae (strain MAFF 311018)).